Reading from the N-terminus, the 225-residue chain is Alpha-tubulin N-acetyltransferase 1 (225 aa).

The N-acetyltransferase domain occupies 1–190 (MEFPFDVDAL…NNFVIFEGFF (190 aa)). An N6-acetyllysine; by autocatalysis modification is found at K56. 124–137 (FYIHESLQRHGHGR) is a binding site for acetyl-CoA. At K146 the chain carries N6-acetyllysine; by autocatalysis. 160 to 169 (SQKLLKFLNK) lines the acetyl-CoA pocket. A disordered region spans residues 195–225 (PPARKLPPKRAEGDIKPYSSSDRESGLPQGW). A compositionally biased stretch (basic and acidic residues) spans 203-219 (KRAEGDIKPYSSSDRES). K210 is modified (N6-acetyllysine; by autocatalysis).

Belongs to the acetyltransferase ATAT1 family. Component of the BBSome complex. Interacts with AP2 alpha-adaptins, including AP2A2, but not with AP1 gamma-adaptin (AP1G1/AP1G2); this interaction is required for efficient alpha-tubulin acetylation, hence clathrin-coated pits are sites of microtubule acetylation. Autoacetylation strongly increases tubulin acetylation.

Its subcellular location is the cytoplasm. It is found in the membrane. The protein resides in the clathrin-coated pit. The protein localises to the cell junction. It localises to the focal adhesion. Its subcellular location is the cell projection. It is found in the axon. The protein resides in the cytoskeleton. The protein localises to the spindle. The enzyme catalyses L-lysyl-[alpha-tubulin] + acetyl-CoA = N(6)-acetyl-L-lysyl-[alpha-tubulin] + CoA + H(+). In terms of biological role, specifically acetylates 'Lys-40' in alpha-tubulin on the lumenal side of microtubules. Promotes microtubule destabilization and accelerates microtubule dynamics; this activity may be independent of acetylation activity. Acetylates alpha-tubulin with a slow enzymatic rate, due to a catalytic site that is not optimized for acetyl transfer. Enters the microtubule through each end and diffuses quickly throughout the lumen of microtubules. Acetylates only long/old microtubules because of its slow acetylation rate since it does not have time to act on dynamically unstable microtubules before the enzyme is released. Required for normal sperm flagellar function. Promotes directional cell locomotion and chemotaxis, through AP2A2-dependent acetylation of alpha-tubulin at clathrin-coated pits that are concentrated at the leading edge of migrating cells. May facilitate primary cilium assembly. This is Alpha-tubulin N-acetyltransferase 1 from Bos taurus (Bovine).